Consider the following 194-residue polypeptide: Holliday junction branch migration complex subunit RuvA (194 aa).

Residues 1-61 are domain I; it reads MIASLSGLLE…EDSVSLYGFA (61 aa). Positions 62-136 are domain II; that stretch reads SVLECTVFEQ…GKLTSVPLEN (75 aa). The tract at residues 136–140 is flexible linker; that stretch reads NRKQE. The segment at 141–194 is domain III; that stretch reads QAVDRSAEIVQALIGLGWQRQESAAAVESVLEKDQSLTMPEILRNALRYLAKQE.

It belongs to the RuvA family. In terms of assembly, homotetramer. Forms an RuvA(8)-RuvB(12)-Holliday junction (HJ) complex. HJ DNA is sandwiched between 2 RuvA tetramers; dsDNA enters through RuvA and exits via RuvB. An RuvB hexamer assembles on each DNA strand where it exits the tetramer. Each RuvB hexamer is contacted by two RuvA subunits (via domain III) on 2 adjacent RuvB subunits; this complex drives branch migration. In the full resolvosome a probable DNA-RuvA(4)-RuvB(12)-RuvC(2) complex forms which resolves the HJ.

The protein resides in the cytoplasm. Its function is as follows. The RuvA-RuvB-RuvC complex processes Holliday junction (HJ) DNA during genetic recombination and DNA repair, while the RuvA-RuvB complex plays an important role in the rescue of blocked DNA replication forks via replication fork reversal (RFR). RuvA specifically binds to HJ cruciform DNA, conferring on it an open structure. The RuvB hexamer acts as an ATP-dependent pump, pulling dsDNA into and through the RuvAB complex. HJ branch migration allows RuvC to scan DNA until it finds its consensus sequence, where it cleaves and resolves the cruciform DNA. The sequence is that of Holliday junction branch migration complex subunit RuvA from Tropheryma whipplei (strain Twist) (Whipple's bacillus).